A 377-amino-acid polypeptide reads, in one-letter code: Histone deacetylase 8 (377 aa).

The tract at residues 14-324 (LPPVYIYSPE…WTYLTGVILG (311 aa)) is histone deacetylase. Serine 39 is modified (phosphoserine). Aspartate 101 serves as a coordination point for substrate. Histidine 143 serves as the catalytic Proton acceptor. Glycine 151 is a substrate binding site. The a divalent metal cation site is built by aspartate 178, histidine 180, and aspartate 267. Residue tyrosine 306 participates in substrate binding.

The protein belongs to the histone deacetylase family. HD type 1 subfamily. Interacts with CBFA2T3. Interacts with phosphorylated SMG5/EST1B; this interaction protects SMG5 from ubiquitin-mediated degradation. Associates with alpha-SMA (smooth muscle alpha-actin). A divalent metal cation is required as a cofactor. Phosphorylated by PKA on serine 39. Phosphorylation reduces deacetylase activity observed preferentially on histones H3 and H4.

The protein localises to the nucleus. The protein resides in the chromosome. It is found in the cytoplasm. The enzyme catalyses N(6)-acetyl-L-lysyl-[histone] + H2O = L-lysyl-[histone] + acetate. It carries out the reaction N(6)-acetyl-L-lysyl-[protein] + H2O = L-lysyl-[protein] + acetate. It catalyses the reaction N(6)-(2E)-butenoyl-L-lysyl-[protein] + H2O = (2E)-2-butenoate + L-lysyl-[protein]. Its activity is inhibited by trichostatin A (TSA) and butyrate, 2 well known histone deacetylase inhibitors. In terms of biological role, histone deacetylase that catalyzes the deacetylation of lysine residues on the N-terminal part of the core histones (H2A, H2B, H3 and H4). Histone deacetylation gives a tag for epigenetic repression and plays an important role in transcriptional regulation, cell cycle progression and developmental events. Histone deacetylases act via the formation of large multiprotein complexes. Also involved in the deacetylation of cohesin complex protein SMC3 regulating release of cohesin complexes from chromatin. May play a role in smooth muscle cell contractility. In addition to protein deacetylase activity, also has protein-lysine deacylase activity: acts as a protein decrotonylase by mediating decrotonylation ((2E)-butenoyl) of histones. The chain is Histone deacetylase 8 (HDAC8) from Bos taurus (Bovine).